Here is an 86-residue protein sequence, read N- to C-terminus: Large ribosomal subunit protein eL20 (86 aa).

This sequence belongs to the eukaryotic ribosomal protein eL20 family. Part of the 50S ribosomal subunit. Binds 23S rRNA.

The protein is Large ribosomal subunit protein eL20 of Saccharolobus islandicus (strain Y.N.15.51 / Yellowstone #2) (Sulfolobus islandicus).